A 213-amino-acid polypeptide reads, in one-letter code: Octanoyltransferase (213 aa).

In terms of domain architecture, BPL/LPL catalytic spans 32–207; it reads ESTLDEIWLV…NILALLNNPD (176 aa). Residues 71-78, 138-140, and 151-153 contribute to the substrate site; these read RGGQVTYH, SLG, and GLA. Residue cysteine 169 is the Acyl-thioester intermediate of the active site.

It belongs to the LipB family.

It is found in the cytoplasm. The enzyme catalyses octanoyl-[ACP] + L-lysyl-[protein] = N(6)-octanoyl-L-lysyl-[protein] + holo-[ACP] + H(+). The protein operates within protein modification; protein lipoylation via endogenous pathway; protein N(6)-(lipoyl)lysine from octanoyl-[acyl-carrier-protein]: step 1/2. Functionally, catalyzes the transfer of endogenously produced octanoic acid from octanoyl-acyl-carrier-protein onto the lipoyl domains of lipoate-dependent enzymes. Lipoyl-ACP can also act as a substrate although octanoyl-ACP is likely to be the physiological substrate. The polypeptide is Octanoyltransferase (Escherichia coli O17:K52:H18 (strain UMN026 / ExPEC)).